Here is a 395-residue protein sequence, read N- to C-terminus: Elongation factor Tu (395 aa).

One can recognise a tr-type G domain in the interval 10–205 (KPHVNIGTIG…CDTWIPLPPR (196 aa)). The segment at 19–26 (GHVDHGKT) is G1. 19–26 (GHVDHGKT) is a GTP binding site. Thr26 serves as a coordination point for Mg(2+). A G2 region spans residues 60–64 (GITIN). The G3 stretch occupies residues 81-84 (DCPG). GTP is bound by residues 81-85 (DCPGH) and 136-139 (NKCD). Positions 136–139 (NKCD) are G4. Residues 174-176 (SAL) are G5.

The protein belongs to the TRAFAC class translation factor GTPase superfamily. Classic translation factor GTPase family. EF-Tu/EF-1A subfamily. In terms of assembly, monomer.

The protein resides in the cytoplasm. It catalyses the reaction GTP + H2O = GDP + phosphate + H(+). GTP hydrolase that promotes the GTP-dependent binding of aminoacyl-tRNA to the A-site of ribosomes during protein biosynthesis. This Parabacteroides distasonis (strain ATCC 8503 / DSM 20701 / CIP 104284 / JCM 5825 / NCTC 11152) protein is Elongation factor Tu.